Consider the following 227-residue polypeptide: Cytochrome c oxidase subunit 2 (227 aa).

The Mitochondrial intermembrane portion of the chain corresponds to 1 to 14 (MAYPLQLGLQDATS). Residues 15-45 (PIMEELMNFHDHTLMIVFLISSLVLYIISLM) form a helical membrane-spanning segment. Residues 46–59 (LTTKLTHTSTMDAQ) are Mitochondrial matrix-facing. A helical membrane pass occupies residues 60–87 (EVETIWTILPAAILVLIALPSLRILYMM). The Mitochondrial intermembrane portion of the chain corresponds to 88–227 (DEINNPVLTV…YFENWSASMI (140 aa)). Residues His161, Cys196, Glu198, Cys200, His204, and Met207 each contribute to the Cu cation site. Glu198 contributes to the Mg(2+) binding site. Phosphotyrosine is present on Tyr218.

Belongs to the cytochrome c oxidase subunit 2 family. As to quaternary structure, component of the cytochrome c oxidase (complex IV, CIV), a multisubunit enzyme composed of 14 subunits. The complex is composed of a catalytic core of 3 subunits MT-CO1, MT-CO2 and MT-CO3, encoded in the mitochondrial DNA, and 11 supernumerary subunits COX4I, COX5A, COX5B, COX6A, COX6B, COX6C, COX7A, COX7B, COX7C, COX8 and NDUFA4, which are encoded in the nuclear genome. The complex exists as a monomer or a dimer and forms supercomplexes (SCs) in the inner mitochondrial membrane with NADH-ubiquinone oxidoreductase (complex I, CI) and ubiquinol-cytochrome c oxidoreductase (cytochrome b-c1 complex, complex III, CIII), resulting in different assemblies (supercomplex SCI(1)III(2)IV(1) and megacomplex MCI(2)III(2)IV(2)). Found in a complex with TMEM177, COA6, COX18, COX20, SCO1 and SCO2. Interacts with TMEM177 in a COX20-dependent manner. Interacts with COX20. Interacts with COX16. Cu cation serves as cofactor.

It localises to the mitochondrion inner membrane. It carries out the reaction 4 Fe(II)-[cytochrome c] + O2 + 8 H(+)(in) = 4 Fe(III)-[cytochrome c] + 2 H2O + 4 H(+)(out). Its function is as follows. Component of the cytochrome c oxidase, the last enzyme in the mitochondrial electron transport chain which drives oxidative phosphorylation. The respiratory chain contains 3 multisubunit complexes succinate dehydrogenase (complex II, CII), ubiquinol-cytochrome c oxidoreductase (cytochrome b-c1 complex, complex III, CIII) and cytochrome c oxidase (complex IV, CIV), that cooperate to transfer electrons derived from NADH and succinate to molecular oxygen, creating an electrochemical gradient over the inner membrane that drives transmembrane transport and the ATP synthase. Cytochrome c oxidase is the component of the respiratory chain that catalyzes the reduction of oxygen to water. Electrons originating from reduced cytochrome c in the intermembrane space (IMS) are transferred via the dinuclear copper A center (CU(A)) of subunit 2 and heme A of subunit 1 to the active site in subunit 1, a binuclear center (BNC) formed by heme A3 and copper B (CU(B)). The BNC reduces molecular oxygen to 2 water molecules using 4 electrons from cytochrome c in the IMS and 4 protons from the mitochondrial matrix. This is Cytochrome c oxidase subunit 2 (MT-CO2) from Micaelamys namaquensis (Namaqua rock rat).